We begin with the raw amino-acid sequence, 84 residues long: Turripeptide IX-01 (84 aa).

An N-terminal signal peptide occupies residues 1 to 21; sequence MGFYMLLTVALLLTSFMSVEA. The propeptide occupies 22 to 39; sequence TPVDQAERSAMKESGLAH. Cystine bridges form between Cys48–Cys70, Cys55–Cys74, and Cys60–Cys81.

In terms of tissue distribution, expressed by the venom duct.

It is found in the secreted. The sequence is that of Turripeptide IX-01 from Gemmula speciosa (Splendid gem-turris).